The following is a 197-amino-acid chain: MRLCDRDIYQHLQDGKIKIDPTPDYDQISGVTVDIRLGNKFRVFEDHQAPFIDLSGPKAQVQEALDHVMSDEIELEEGKAFFLHPGELALAITHESVTLPDNIVGWLDGRSSLARLGLMVHVTAHRIDPGWSGNIVLEFYNSGKLPLALRPKMKIGALSFEVLSAPAEKPYNARVDAKYKGQAGAVASRISSDDQSK.

Residues 110-115 (RSSLAR), D128, 136-138 (VLE), Y171, and Q182 contribute to the dCTP site. The Proton donor/acceptor role is filled by E138.

Belongs to the dCTP deaminase family. As to quaternary structure, homotrimer.

The catalysed reaction is dCTP + H2O + H(+) = dUTP + NH4(+). The protein operates within pyrimidine metabolism; dUMP biosynthesis; dUMP from dCTP (dUTP route): step 1/2. Catalyzes the deamination of dCTP to dUTP. This chain is dCTP deaminase, found in Alteromonas mediterranea (strain DSM 17117 / CIP 110805 / LMG 28347 / Deep ecotype).